The following is a 138-amino-acid chain: Large ribosomal subunit protein uL16 (138 aa).

Basic residues predominate over residues 1–17; sequence MLIPRKVKHRKQHHPRQ. The tract at residues 1-22 is disordered; it reads MLIPRKVKHRKQHHPRQRGIAS.

This sequence belongs to the universal ribosomal protein uL16 family. In terms of assembly, part of the 50S ribosomal subunit.

In terms of biological role, binds 23S rRNA and is also seen to make contacts with the A and possibly P site tRNAs. This is Large ribosomal subunit protein uL16 from Mycobacterium tuberculosis (strain ATCC 25177 / H37Ra).